The following is a 146-amino-acid chain: Hemoglobin subunit beta (146 aa).

An N-acetylvaline modification is found at Val1. The Globin domain occupies 2–146; it reads HLTAEEKNAI…VANALAHKYH (145 aa). At Thr12 the chain carries Phosphothreonine. At Lys59 the chain carries N6-acetyllysine. Heme b is bound at residue His63. An N6-acetyllysine modification is found at Lys82. His92 provides a ligand contact to heme b. S-nitrosocysteine is present on Cys93. Residue Lys144 is modified to N6-acetyllysine.

Belongs to the globin family. As to quaternary structure, heterotetramer of two alpha chains and two beta chains. In terms of tissue distribution, red blood cells.

Its function is as follows. Involved in oxygen transport from the lung to the various peripheral tissues. This is Hemoglobin subunit beta (HBB) from Osphranter rufus (Red kangaroo).